Here is an 89-residue protein sequence, read N- to C-terminus: Large ribosomal subunit protein bL27 (89 aa).

Positions 1–24 (MAHKKAGGSSRNGRDSDGRRLGVK) are disordered.

The protein belongs to the bacterial ribosomal protein bL27 family.

The protein is Large ribosomal subunit protein bL27 of Azorhizobium caulinodans (strain ATCC 43989 / DSM 5975 / JCM 20966 / LMG 6465 / NBRC 14845 / NCIMB 13405 / ORS 571).